Here is a 189-residue protein sequence, read N- to C-terminus: Small ribosomal subunit protein uS5 (189 aa).

Residues 23–86 (FIDKLVHINR…ESAKREMIYV (64 aa)) enclose the S5 DRBM domain.

This sequence belongs to the universal ribosomal protein uS5 family. Part of the 30S ribosomal subunit. Contacts proteins S4 and S8.

Its function is as follows. With S4 and S12 plays an important role in translational accuracy. Located at the back of the 30S subunit body where it stabilizes the conformation of the head with respect to the body. In Bartonella bacilliformis (strain ATCC 35685 / KC583 / Herrer 020/F12,63), this protein is Small ribosomal subunit protein uS5.